Consider the following 687-residue polypeptide: Probable ATP-dependent RNA helicase Dbp73D (687 aa).

Disordered stretches follow at residues 1–26 and 52–87; these read MELF…TNNE and TPIL…EEDV. Composition is skewed to basic and acidic residues over residues 9 to 18 and 54 to 79; these read YTEDLKEQKD and ILEK…EKPL. Residues 160–168 carry the Q motif motif; sequence LFPVQKQVI. In terms of domain architecture, Helicase ATP-binding spans 177–381; that stretch reads KPPPFRPRDI…DLRLFQPRLF (205 aa). An ATP-binding site is contributed by 190 to 197; that stretch reads APTGSGKT. The DEAD box signature appears at 305–308; it reads DEAD. A Helicase C-terminal domain is found at 434-583; sequence TVFALVEKYK…EIHVSPDIEI (150 aa). The tract at residues 646-675 is disordered; sequence IVQSSKKSSETKNSKTKADKTKYQPKETKK. The span at 652–675 shows a compositional bias: basic and acidic residues; the sequence is KSSETKNSKTKADKTKYQPKETKK.

It belongs to the DEAD box helicase family. DDX51/DBP6 subfamily. In terms of tissue distribution, expressed in the germline tissue of the ovary.

It localises to the nucleus. It is found in the nucleolus. The catalysed reaction is ATP + H2O = ADP + phosphate + H(+). In terms of biological role, ATP-binding RNA helicase involved in the biogenesis of 60S ribosomal subunits. The protein is Probable ATP-dependent RNA helicase Dbp73D (Dbp73D) of Drosophila melanogaster (Fruit fly).